The primary structure comprises 36 residues: Amanexitide proprotein 2 (36 aa).

Residues 1 to 10 constitute a propeptide that is removed on maturation; that stretch reads MSDINATRLP. Residues 11–19 constitute a cross-link (cyclopeptide (Val-Pro)); that stretch reads VFSLPVFFP. Residues 20–36 constitute a propeptide that is removed on maturation; sequence FVSDDIQAVLTRGESLC.

The protein belongs to the MSDIN fungal toxin family. Processed by the macrocyclase-peptidase enzyme POPB to yield a toxic cyclic nonapeptide. POPB first removes 10 residues from the N-terminus. Conformational trapping of the remaining peptide forces the enzyme to release this intermediate rather than proceed to macrocyclization. The enzyme rebinds the remaining peptide in a different conformation and catalyzes macrocyclization of the N-terminal 9 residues. Expressed in basidiocarps.

Cyclic nonapeptide that belongs to the MSDIN-like toxin family responsible for a large number of food poisoning cases and deaths. The chain is Amanexitide proprotein 2 from Amanita exitialis (Guangzhou destroying angel).